We begin with the raw amino-acid sequence, 517 residues long: GTPase Obg (517 aa).

The region spanning 2 to 159 (ATFVDTVTLH…GDVVLELKVV (158 aa)) is the Obg domain. In terms of domain architecture, OBG-type G spans 160 to 336 (ADVALVGYPS…LSFALAELVK (177 aa)). Residues 166–173 (GYPSAGKS), 191–195 (FTTLH), 212–215 (DVPG), 288–291 (NKID), and 317–319 (STV) each bind GTP. Residues Ser-173 and Thr-193 each coordinate Mg(2+). Residues 355 to 439 (PRAVDEKPFT…GDGVVFDWEP (85 aa)) enclose the OCT domain. The segment at 490–517 (EGEAGLWADEDGTGQDGTDEDATTDAKA) is disordered. The segment covering 497 to 517 (ADEDGTGQDGTDEDATTDAKA) has biased composition (acidic residues).

This sequence belongs to the TRAFAC class OBG-HflX-like GTPase superfamily. OBG GTPase family. As to quaternary structure, monomer. Mg(2+) is required as a cofactor.

It localises to the cytoplasm. An essential GTPase which binds GTP, GDP and possibly (p)ppGpp with moderate affinity, with high nucleotide exchange rates and a fairly low GTP hydrolysis rate. Plays a role in control of the cell cycle, stress response, ribosome biogenesis and in those bacteria that undergo differentiation, in morphogenesis control. This is GTPase Obg from Clavibacter sepedonicus (Clavibacter michiganensis subsp. sepedonicus).